Consider the following 319-residue polypeptide: tRNA-modifying protein YgfZ (319 aa).

Folate contacts are provided by W27 and W189.

It belongs to the tRNA-modifying YgfZ family.

Its subcellular location is the cytoplasm. Folate-binding protein involved in regulating the level of ATP-DnaA and in the modification of some tRNAs. It is probably a key factor in regulatory networks that act via tRNA modification, such as initiation of chromosomal replication. This chain is tRNA-modifying protein YgfZ, found in Buchnera aphidicola subsp. Acyrthosiphon pisum (strain APS) (Acyrthosiphon pisum symbiotic bacterium).